The chain runs to 129 residues: Small ribosomal subunit protein uS9 (129 aa).

This sequence belongs to the universal ribosomal protein uS9 family.

This chain is Small ribosomal subunit protein uS9, found in Chlorobium chlorochromatii (strain CaD3).